Here is a 174-residue protein sequence, read N- to C-terminus: V-type proton ATPase catalytic subunit A (174 aa).

This sequence belongs to the ATPase alpha/beta chains family. V-ATPase is a heteromultimeric enzyme made up of two complexes: the ATP-hydrolytic V1 complex and the proton translocation V0 complex. The V1 complex consists of three catalytic AB heterodimers that form a heterohexamer, three peripheral stalks each consisting of EG heterodimers, one central rotor including subunits D and F, and the regulatory subunits C and H. The proton translocation complex V0 consists of the proton transport subunit a, a ring of proteolipid subunits c9c'', rotary subunit d, subunits e and f, and the accessory subunits ATP6AP1/Ac45 and ATP6AP2/PRR. Interacts with the V0 complex V-ATPase subunit a4 ATP6V0A4. Interacts with WFS1. Interacts with alpha-crystallin B chain/CRYAB and with MTOR, forming a ternary complex.

The protein resides in the cytoplasm. It localises to the cytosol. It is found in the cytoplasmic vesicle. The protein localises to the secretory vesicle. Its subcellular location is the clathrin-coated vesicle membrane. The protein resides in the lysosome. It carries out the reaction ATP + H2O + 4 H(+)(in) = ADP + phosphate + 5 H(+)(out). ATP hydrolysis occurs at the interface between the nucleotide-binding domains of subunits A and B. ATP hydrolysis triggers a conformational change in the subunits D and F, which induces a shift of subunit d. The c-ring is subsequently rotated and results in a continuous proton translocation across the membrane. In terms of biological role, catalytic subunit of the V1 complex of vacuolar(H+)-ATPase (V-ATPase), a multisubunit enzyme composed of a peripheral complex (V1) that hydrolyzes ATP and a membrane integral complex (V0) that translocates protons. V-ATPase is responsible for acidifying and maintaining the pH of intracellular compartments and in some cell types, is targeted to the plasma membrane, where it is responsible for acidifying the extracellular environment. In aerobic conditions, involved in intracellular iron homeostasis, thus triggering the activity of Fe(2+) prolyl hydroxylase (PHD) enzymes, and leading to HIF1A hydroxylation and subsequent proteasomal degradation. May play a role in neurite development and synaptic connectivity. This is V-type proton ATPase catalytic subunit A from Mesocricetus auratus (Golden hamster).